Here is a 328-residue protein sequence, read N- to C-terminus: Putative P2Y purinoceptor 10 (328 aa).

Residues 1–27 (MGSNSTSSAESNCNATYLPFQYSLYAT) are Extracellular-facing. Asn-4 and Asn-14 each carry an N-linked (GlcNAc...) asparagine glycan. Residues 28–48 (TYIFIFIPGLLANSAALWVLC) form a helical membrane-spanning segment. The Cytoplasmic portion of the chain corresponds to 49 to 56 (RFISKKNK). A helical transmembrane segment spans residues 57 to 77 (AIIFMINLSVADLAHILSLPL). The Extracellular portion of the chain corresponds to 78-91 (RIYYYINRHWPFQR). Residues 92-112 (ALCLLCFYLKYLNMYASIFFL) form a helical membrane-spanning segment. Cys-94 and Cys-170 form a disulfide bridge. Residues 113–137 (TCISLQRCLFLLKPFRARNWKRRYD) lie on the Cytoplasmic side of the membrane. The helical transmembrane segment at 138-158 (VGISAVIWIVVGTACLPFPIL) threads the bilayer. Residues 159–182 (RNAGLANSTDSCFADLGYKQMDAV) are Extracellular-facing. A helical membrane pass occupies residues 183–203 (VLVTMVVIAELAGFVIPVITI). Topologically, residues 204-233 (ACCTWKTTVSLKHPPIAFQGISERKKALRM) are cytoplasmic. Residues 234–254 (VFMCAAVFVICFTPYHINFIF) traverse the membrane as a helical segment. Over 255-277 (YTMVKESIITSCPTVKSTLYFHP) the chain is Extracellular. Residues 278 to 298 (FSLCLASLCCLLDPILYYFMA) traverse the membrane as a helical segment. Residues 299–328 (SEFRDQLSRHGSSVTRSRLMSRESGSSMVN) lie on the Cytoplasmic side of the membrane.

It belongs to the G-protein coupled receptor 1 family.

The protein resides in the cell membrane. In terms of biological role, putative receptor for purines coupled to G-proteins. The sequence is that of Putative P2Y purinoceptor 10 (P2ry10) from Mus musculus (Mouse).